The chain runs to 1109 residues: RNA2 polyprotein (1109 aa).

Belongs to the nepoviruses RNA2 polyprotein family. In terms of processing, specific enzymatic cleavages in vivo by the P1 encoded 3C-like protease yield mature proteins.

The protein localises to the host cell junction. It is found in the host plasmodesma. The protein resides in the host cytoplasm. It localises to the host nucleus. Its subcellular location is the virion. In terms of biological role, implicated in RNA2 replication. Could also be required for nematode transmission of the virus. Its function is as follows. Transports viral genome to neighboring plant cells directly through plasmosdesmata, without any budding. The movement protein allows efficient cell to cell propagation, by bypassing the host cell wall barrier. Acts by forming a tubular structure at the host plasmodesmata, enlarging it enough to allow free passage of virion capsids. This is RNA2 polyprotein from Vitis rupestris (Grape).